The chain runs to 545 residues: RAN GTPase-activating protein 2 (545 aa).

The tract at residues 1-116 (MADILDSRPH…VAARELISED (116 aa)) is WPP. LRR repeat units lie at residues 213 to 236 (GSIL…AFGA), 241 to 264 (LSSL…AVSE), 269 to 296 (TENL…VVKR), 325 to 348 (CTHM…SLSK), 353 to 380 (FKHM…ALKE), 382 to 405 (ASPI…AIAA), 410 to 433 (KQDL…QIAN), 439 to 462 (HSKL…ALAH), and 467 to 494 (KEAF…IFKK). The interval 496–545 (PELLGALDENDPDGEEDDDDEEDEEDEENEGNGNGELESKLKNLEVNQED) is disordered. The segment covering 503–525 (DENDPDGEEDDDDEEDEEDEENE) has biased composition (acidic residues).

It belongs to the RNA1 family. In terms of assembly, homodimer. Interacts with WIP1 and WIP2 through its WPP domain. Component of Ran complexes at least composed of WIT1 or WIT2, RANGAP1 or RANGAP2, and WIP1 or WIP2 or WIP3. Interacts with WIT1.

It localises to the cytoplasm. Its subcellular location is the nucleus membrane. The protein localises to the cytoskeleton. It is found in the spindle. The protein resides in the phragmoplast. In terms of biological role, GTPase activator for the nuclear Ras-related regulatory protein Ran, converting it to the putatively inactive GDP-bound state. The sequence is that of RAN GTPase-activating protein 2 (RANGAP2) from Arabidopsis thaliana (Mouse-ear cress).